The primary structure comprises 227 residues: Homeobox-leucine zipper protein ATHB-54 (227 aa).

The homeobox DNA-binding region spans 65–124 (EITKKRKLTPIQLRLLEESFEEEKRLEPDRKLWLAEKLGLQPSQVAVWFQNRRARYKTKQ). Positions 125 to 153 (LEHDCDSLKASYAKLKTDWDILFVQNQTL) are leucine-zipper. A disordered region spans residues 175 to 198 (IERKRLGEEGSSVKSDNTQYSEEE).

The protein belongs to the HD-ZIP homeobox family. Class I subfamily. In terms of tissue distribution, predominantly expressed in flowers and siliques.

It localises to the nucleus. Its function is as follows. Probable transcription factor. The chain is Homeobox-leucine zipper protein ATHB-54 (ATHB-54) from Arabidopsis thaliana (Mouse-ear cress).